Consider the following 1462-residue polypeptide: Iron-sulfur cluster assembly protein SufD (1462 aa).

Disordered regions lie at residues 500–525, 938–970, and 1111–1153; these read IDNNQNDDIDNNNNNNNNNNNCDNPY, NQNKENENENENNSQSDNNTTKQHIQDEQGTEQ, and NIPS…EKEE. Low complexity predominate over residues 510-523; sequence NNNNNNNNNNNCDN. Residues 961 to 970 are compositionally biased toward basic and acidic residues; sequence HIQDEQGTEQ. Residues 1111–1136 show a composition bias toward low complexity; it reads NIPSNNKQTNSNNNSEYNNEQNNCSN.

It belongs to the iron-sulfur cluster assembly SufBD family. In terms of assembly, component of a complex composed of SufB, SufC and SufD in a stoichiometric ratio of 1:2:1. Interacts with SufB. Interacts with SufC; the interaction enhances the ATPase activity of SufC. Proteolytically cleaved.

It localises to the plastid. The protein localises to the apicoplast. It participates in cofactor biosynthesis; iron-sulfur cluster biosynthesis. Its function is as follows. Participates in the sulfur mobilization (SUF) pathway for iron-sulfur (Fe-S) cluster biogenesis. As part of a complex consisting of SufB-SufC(2)-SufD, involved in assembly of [4Fe-4S] clusters. Enhances the ATPase activity of SufC. The protein is Iron-sulfur cluster assembly protein SufD of Plasmodium falciparum (isolate 3D7).